The chain runs to 154 residues: Transcriptional repressor NrdR (154 aa).

A zinc finger lies at 3 to 34; it reads CPFCGANDTKVIDSRLVAEGEQVRRRRECVAC. The 91-residue stretch at 49-139 folds into the ATP-cone domain; the sequence is PRLIKQDGTR…VYRRFQDLDE (91 aa).

Belongs to the NrdR family. It depends on Zn(2+) as a cofactor.

Negatively regulates transcription of bacterial ribonucleotide reductase nrd genes and operons by binding to NrdR-boxes. In Pseudomonas putida (strain GB-1), this protein is Transcriptional repressor NrdR.